Reading from the N-terminus, the 152-residue chain is Transcriptional regulator MraZ (152 aa).

SpoVT-AbrB domains lie at 5 to 52 (ATLV…TLPE) and 81 to 124 (ASEC…DEQV).

This sequence belongs to the MraZ family. Forms oligomers.

The protein localises to the cytoplasm. The protein resides in the nucleoid. Functionally, negatively regulates its own expression and that of the subsequent genes in the proximal part of the division and cell wall (dcw) gene cluster. Acts by binding directly to DNA. May also regulate the expression of genes outside the dcw cluster. This is Transcriptional regulator MraZ from Proteus mirabilis (strain HI4320).